The primary structure comprises 512 residues: D-alanine--D-alanyl carrier protein ligase (512 aa).

Position 152–153 (Thr152–Ser153) interacts with ATP. Asp199 contributes to the D-alanine binding site. Asn294–Thr299 is an ATP binding site. Val303 contributes to the D-alanine binding site. ATP-binding positions include Asp385, Tyr397–Arg400, and Lys499. Residue Lys499 coordinates D-alanine.

This sequence belongs to the ATP-dependent AMP-binding enzyme family. DltA subfamily.

It is found in the cytoplasm. The enzyme catalyses holo-[D-alanyl-carrier protein] + D-alanine + ATP = D-alanyl-[D-alanyl-carrier protein] + AMP + diphosphate. Its pathway is cell wall biogenesis; lipoteichoic acid biosynthesis. Functionally, catalyzes the first step in the D-alanylation of lipoteichoic acid (LTA), the activation of D-alanine and its transfer onto the D-alanyl carrier protein (Dcp) DltC. In an ATP-dependent two-step reaction, forms a high energy D-alanyl-AMP intermediate, followed by transfer of the D-alanyl residue as a thiol ester to the phosphopantheinyl prosthetic group of the Dcp. D-alanylation of LTA plays an important role in modulating the properties of the cell wall in Gram-positive bacteria, influencing the net charge of the cell wall. In Streptococcus pyogenes serotype M1, this protein is D-alanine--D-alanyl carrier protein ligase.